A 263-amino-acid polypeptide reads, in one-letter code: Lens fiber major intrinsic protein (263 aa).

The Cytoplasmic portion of the chain corresponds to 1–9; sequence MWEFRSFSF. Residues 10-29 traverse the membrane as a helical segment; sequence WRAVFAEFFGTMFYVFFGLG. Residues 30–41 lie on the Extracellular side of the membrane; sequence ASLKWAAGPANV. Residues 42–59 form a helical membrane-spanning segment; sequence LVIALAFGLVLATMVQSI. At 60 to 61 the chain is on the cytoplasmic side; the sequence is GH. The discontinuously helical intramembrane region spans 62–77; the sequence is VSGAHINPAVTFAFLI. Residues 68–70 carry the NPA 1 motif; the sequence is NPA. At 78 to 82 the chain is on the cytoplasmic side; it reads GSQMS. A helical transmembrane segment spans residues 83-106; that stretch reads LFRAIFYIAAQLLGAVAGAAVLYG. The Extracellular segment spans residues 107–127; it reads VTPAAIRGNLALNTLHPGVSL. Residues 128–148 traverse the membrane as a helical segment; it reads GQATTVEIFLTLQFVLCIFAT. Residues 149–156 lie on the Cytoplasmic side of the membrane; sequence YDERRNGR. The chain crosses the membrane as a helical span at residues 157-175; the sequence is LGSVSLAIGFSLTLGHLFG. At 176–178 the chain is on the extracellular side; the sequence is LYY. The segment at residues 179-193 is an intramembrane region (discontinuously helical); that stretch reads TGASMNPARSFAPAV. Residues 184-186 carry the NPA 2 motif; the sequence is NPA. Residues 194–200 lie on the Extracellular side of the membrane; the sequence is LTRNFTN. A helical transmembrane segment spans residues 201-222; sequence HWVYWVGPIIGGALGGLVYDFI. Residues 223–263 are Cytoplasmic-facing; it reads LFPRMRGLSERLSILKGARPAEPEGQQEATGEPIELKTQSL. The interval 227–237 is interaction with CALM; that stretch reads MRGLSERLSIL. A disordered region spans residues 241-263; the sequence is RPAEPEGQQEATGEPIELKTQSL.

The protein belongs to the MIP/aquaporin (TC 1.A.8) family. Homotetramer; each monomer provides an independent water pore. Two homotetramers on opposing membranes can dimerize, forming a cell-cell junction. Interacts with CALM; the calcium-calmodulin/CALM complex interacts with the cytoplasmic domains of two aquaporins, leading to channel closure.

The protein resides in the cell membrane. It localises to the cell junction. It carries out the reaction H2O(in) = H2O(out). The water channel activity is inhibited by calcium through calmodulin/CALM. Functionally, aquaporins form homotetrameric transmembrane channels, with each monomer independently mediating water transport across the plasma membrane along its osmotic gradient. Specifically expressed in lens fiber cells, this aquaporin is crucial for maintaining lens water homeostasis and transparency. Beyond water permeability, it also acts as a cell-to-cell adhesion molecule, forming thin junctions between lens fiber cells that are essential for maintaining the ordered structure and transparency of the lens. This Lithobates pipiens (Northern leopard frog) protein is Lens fiber major intrinsic protein.